The primary structure comprises 537 residues: CTP synthase (537 aa).

Residues methionine 1–leucine 269 are amidoligase domain. Serine 15 serves as a coordination point for CTP. Serine 15 contacts UTP. Position 16-21 (serine 16–isoleucine 21) interacts with ATP. Residue tyrosine 56 participates in L-glutamine binding. Aspartate 73 lines the ATP pocket. Mg(2+)-binding residues include aspartate 73 and glutamate 143. CTP-binding positions include aspartate 150 to glutamate 152, lysine 190 to glutamine 195, and lysine 226. Residues lysine 190–glutamine 195 and lysine 226 each bind UTP. The 243-residue stretch at serine 295–lysine 537 folds into the Glutamine amidotransferase type-1 domain. An L-glutamine-binding site is contributed by glycine 357. The Nucleophile; for glutamine hydrolysis role is filled by cysteine 384. L-glutamine contacts are provided by residues leucine 385–glutamine 388, glutamate 408, and arginine 465. Catalysis depends on residues histidine 510 and glutamate 512.

This sequence belongs to the CTP synthase family. As to quaternary structure, homotetramer.

It catalyses the reaction UTP + L-glutamine + ATP + H2O = CTP + L-glutamate + ADP + phosphate + 2 H(+). The catalysed reaction is L-glutamine + H2O = L-glutamate + NH4(+). It carries out the reaction UTP + NH4(+) + ATP = CTP + ADP + phosphate + 2 H(+). It functions in the pathway pyrimidine metabolism; CTP biosynthesis via de novo pathway; CTP from UDP: step 2/2. Its activity is regulated as follows. Allosterically activated by GTP, when glutamine is the substrate; GTP has no effect on the reaction when ammonia is the substrate. The allosteric effector GTP functions by stabilizing the protein conformation that binds the tetrahedral intermediate(s) formed during glutamine hydrolysis. Inhibited by the product CTP, via allosteric rather than competitive inhibition. Functionally, catalyzes the ATP-dependent amination of UTP to CTP with either L-glutamine or ammonia as the source of nitrogen. Regulates intracellular CTP levels through interactions with the four ribonucleotide triphosphates. This chain is CTP synthase, found in Flavobacterium psychrophilum (strain ATCC 49511 / DSM 21280 / CIP 103535 / JIP02/86).